A 236-amino-acid chain; its full sequence is T-cell surface glycoprotein CD8 alpha chain (236 aa).

Residues 1–26 (MASRVICFLSLNLLLLDVITRLQVSG) form the signal peptide. Residues 27 to 130 (QLQLSPKKVD…ITSNSVMYFS (104 aa)) enclose the Ig-like V-type domain. The Extracellular segment spans residues 27–189 (QLQLSPKKVD…MGLGFACDIY (163 aa)). A disulfide bond links C47 and C119. N63 carries N-linked (GlcNAc...) asparagine glycosylation. The O-linked (GalNAc...) threonine; partial glycan is linked to T144. T148, T152, T158, and T160 each carry an O-linked (GalNAc...) threonine glycan. The interval 150–170 (APTPVPPPTGTPRPLRPEACR) is disordered. Residues 190-210 (IWAPLAGICAVLLLSLVITLI) traverse the membrane as a helical segment. Residue C211 is the site of S-palmitoyl cysteine attachment. The Cytoplasmic portion of the chain corresponds to 211 to 236 (CCHRNRRRVCKCPRPLVKPRPSEKFV).

As to quaternary structure, forms disulfide-linked heterodimers with CD8B at the cell surface. Also forms homodimers in several cell types including NK-cells or peripheral blood T-lymphocytes. Interacts with the MHC class I HLA-A/B2M dimer. Interacts with LCK in a zinc-dependent manner. Post-translationally, palmitoylated, but association with CD8B seems to be more important for the enrichment of CD8A in lipid rafts. O-glycosylated. In terms of processing, phosphorylated in cytotoxic T-lymphocytes (CTLs) following activation.

The protein resides in the cell membrane. In terms of biological role, integral membrane glycoprotein that plays an essential role in the immune response and serves multiple functions in responses against both external and internal offenses. In T-cells, functions primarily as a coreceptor for MHC class I molecule:peptide complex. The antigens presented by class I peptides are derived from cytosolic proteins while class II derived from extracellular proteins. Interacts simultaneously with the T-cell receptor (TCR) and the MHC class I proteins presented by antigen presenting cells (APCs). In turn, recruits the Src kinase LCK to the vicinity of the TCR-CD3 complex. LCK then initiates different intracellular signaling pathways by phosphorylating various substrates ultimately leading to lymphokine production, motility, adhesion and activation of cytotoxic T-lymphocytes (CTLs). This mechanism enables CTLs to recognize and eliminate infected cells and tumor cells. In NK-cells, the presence of CD8A homodimers at the cell surface provides a survival mechanism allowing conjugation and lysis of multiple target cells. CD8A homodimer molecules also promote the survival and differentiation of activated lymphocytes into memory CD8 T-cells. The protein is T-cell surface glycoprotein CD8 alpha chain (Cd8a) of Rattus norvegicus (Rat).